A 239-amino-acid polypeptide reads, in one-letter code: Large ribosomal subunit protein uL30 (239 aa).

Positions 1–37 (MSKFVPENVQKKLARDEKLRKAKAEQRKASSAQMKQR) are disordered. Positions 9 to 28 (VQKKLARDEKLRKAKAEQRK) are enriched in basic and acidic residues.

The protein belongs to the universal ribosomal protein uL30 family.

This Tetrahymena thermophila protein is Large ribosomal subunit protein uL30 (RPL7).